Here is a 105-residue protein sequence, read N- to C-terminus: Ig lambda chain C region (105 aa).

Positions 6-100 (PSVILFPPSS…EGHTVEKSLA (95 aa)) constitute an Ig-like domain. Cysteines 27 and 86 form a disulfide.

The sequence is that of Ig lambda chain C region from Oryctolagus cuniculus (Rabbit).